The sequence spans 249 residues: AA9 family lytic polysaccharide monooxygenase cel61B (249 aa).

The N-terminal stretch at 1–19 is a signal peptide; the sequence is MKSCAILAALGCLAGSVLG. Histidine 20 provides a ligand contact to Cu(2+). The N-linked (GlcNAc...) asparagine glycan is linked to asparagine 25. Intrachain disulfides connect cysteine 78-cysteine 198 and cysteine 120-cysteine 124. A Cu(2+)-binding site is contributed by histidine 108. O2 contacts are provided by histidine 184 and glutamine 193. Position 195 (tyrosine 195) interacts with Cu(2+).

The protein belongs to the polysaccharide monooxygenase AA9 family. As to quaternary structure, monomer. Cu(2+) is required as a cofactor.

The protein resides in the secreted. The enzyme catalyses [(1-&gt;4)-beta-D-glucosyl]n+m + reduced acceptor + O2 = 4-dehydro-beta-D-glucosyl-[(1-&gt;4)-beta-D-glucosyl]n-1 + [(1-&gt;4)-beta-D-glucosyl]m + acceptor + H2O.. Functionally, lytic polysaccharide monooxygenase (LPMO) that depolymerizes crystalline and amorphous polysaccharides via the oxidation of scissile alpha- or beta-(1-4)-glycosidic bonds, yielding C1 or C4 oxidation products. Catalysis by LPMOs requires the reduction of the active-site copper from Cu(II) to Cu(I) by a reducing agent and H(2)O(2) or O(2) as a cosubstrate. This chain is AA9 family lytic polysaccharide monooxygenase cel61B, found in Hypocrea jecorina (strain QM6a) (Trichoderma reesei).